A 1070-amino-acid polypeptide reads, in one-letter code: Granule associated Rac and RHOG effector protein 1 (1070 aa).

3 disordered regions span residues 681-771 (EQKA…VGAG), 855-992 (SQAM…STLP), and 1032-1070 (SYVQ…LPQY). Pro residues predominate over residues 692–702 (PSLPVPPPPRA). Composition is skewed to low complexity over residues 719–742 (PQQQ…QPIG), 906–924 (AQGD…NGDS), and 951–962 (TSTLPSPPLLTT). Ser-723 is subject to Phosphoserine. Pro residues predominate over residues 977–992 (PKAPWQHPSPLPSTLP). The span at 1046–1058 (HKAAPKGFKAFPG) shows a compositional bias: low complexity.

As to quaternary structure, interacts with AGO2 and TNRC6A.

Its subcellular location is the cytoplasm. The protein localises to the P-body. Acts as an effector of RAC1. Associates with CCR4-NOT complex which is one of the major cellular mRNA deadenylases and is linked to various cellular processes including bulk mRNA degradation, miRNA-mediated repression, translational repression during translational initiation and general transcription regulation. May also play a role in miRNA silencing machinery. The sequence is that of Granule associated Rac and RHOG effector protein 1 from Homo sapiens (Human).